The primary structure comprises 387 residues: Queuine tRNA-ribosyltransferase (387 aa).

D93 (proton acceptor) is an active-site residue. Residues D93–F97, D147, Q190, and G217 contribute to the substrate site. The tract at residues G248–D254 is RNA binding. The active-site Nucleophile is D267. The segment at T272–R276 is RNA binding; important for wobble base 34 recognition. The Zn(2+) site is built by C305, C307, C310, and H336.

The protein belongs to the queuine tRNA-ribosyltransferase family. As to quaternary structure, homodimer. Within each dimer, one monomer is responsible for RNA recognition and catalysis, while the other monomer binds to the replacement base PreQ1. Requires Zn(2+) as cofactor.

The enzyme catalyses 7-aminomethyl-7-carbaguanine + guanosine(34) in tRNA = 7-aminomethyl-7-carbaguanosine(34) in tRNA + guanine. It functions in the pathway tRNA modification; tRNA-queuosine biosynthesis. Functionally, catalyzes the base-exchange of a guanine (G) residue with the queuine precursor 7-aminomethyl-7-deazaguanine (PreQ1) at position 34 (anticodon wobble position) in tRNAs with GU(N) anticodons (tRNA-Asp, -Asn, -His and -Tyr). Catalysis occurs through a double-displacement mechanism. The nucleophile active site attacks the C1' of nucleotide 34 to detach the guanine base from the RNA, forming a covalent enzyme-RNA intermediate. The proton acceptor active site deprotonates the incoming PreQ1, allowing a nucleophilic attack on the C1' of the ribose to form the product. After dissociation, two additional enzymatic reactions on the tRNA convert PreQ1 to queuine (Q), resulting in the hypermodified nucleoside queuosine (7-(((4,5-cis-dihydroxy-2-cyclopenten-1-yl)amino)methyl)-7-deazaguanosine). The sequence is that of Queuine tRNA-ribosyltransferase from Gluconacetobacter diazotrophicus (strain ATCC 49037 / DSM 5601 / CCUG 37298 / CIP 103539 / LMG 7603 / PAl5).